A 162-amino-acid polypeptide reads, in one-letter code: MMLPSYLHFAIRKKVLAIFIVLLIISAYLGFAPALPVPINDKVCHFFVFFLLTLVFYWVFDLSRRRATQLTILVCGVFGGLGSEFVQSFLTYRTFDLFDIVANLLGCSLALLLNILYHKRRLEKIRLQRYGHVPTIADDLEMQASAAEEEEEGEEDVSKSTP.

4 consecutive transmembrane segments (helical) span residues 15–35, 43–63, 70–90, and 97–117; these read VLAI…APAL, VCHF…FDLS, LTIL…QSFL, and LFDI…NILY.

The protein resides in the membrane. This is an uncharacterized protein from Schizosaccharomyces pombe (strain 972 / ATCC 24843) (Fission yeast).